The sequence spans 602 residues: Protein indeterminate-domain 5, chloroplastic (602 aa).

2 stretches are compositionally biased toward low complexity: residues 1-10 and 21-30; these read MAASSSSAAS and HLLPPNSSAA. Residues 1–50 constitute a chloroplast transit peptide; the sequence is MAASSSSAASFFGVRQDDQSHLLPPNSSAAAPPPPPPHHQAPLPPLEAPP. The segment at 1–65 is disordered; the sequence is MAASSSSAAS…NQPRTPNSDA (65 aa). A compositionally biased stretch (pro residues) spans 31 to 48; the sequence is APPPPPPHHQAPLPPLEA. Threonine 60 is modified (phosphothreonine). Serine 71 is modified (phosphoserine). 2 C2H2-type zinc fingers span residues 81 to 103 and 122 to 152; these read FICE…RRGH and YLCP…YRKH. The C2H2-type 2; degenerate zinc-finger motif lies at 157–180; that stretch reads WKCDKCSKRYAVQSDWKAHSKTCG. Positions 159, 162, 175, 179, 186, 188, 201, and 205 each coordinate Zn(2+). A CCHC-type 2; atypical zinc finger spans residues 184 to 207; the sequence is YRCDCGTLFSRRDSFITHRAFCDA. The interval 194-206 is SHR-binding; that stretch reads RRDSFITHRAFCD. Disordered regions lie at residues 443–467 and 537–602; these read KAAQ…NNAS and KSMS…HASF. Composition is skewed to low complexity over residues 448–467, 546–560, and 570–579; these read GSTS…NNAS, QQQQ…QQQQ, and SSSDSADRSS.

As to quaternary structure, binds to RGA and SCL3 competitively. Highly expressed in leaf tissues.

Its subcellular location is the plastid. The protein localises to the chloroplast. In terms of biological role, transcription factor acting as a positive regulator of the starch synthase SS4. Controls chloroplast development and starch granule formation. Binds DNA via its zinc fingers. Recognizes and binds to SCL3 promoter sequence 5'-AGACAA-3' to promote its expression when in complex with RGA. This Arabidopsis thaliana (Mouse-ear cress) protein is Protein indeterminate-domain 5, chloroplastic.